The primary structure comprises 374 residues: Ribosomal RNA large subunit methyltransferase G (374 aa).

Belongs to the methyltransferase superfamily. RlmG family.

It localises to the cytoplasm. The catalysed reaction is guanosine(1835) in 23S rRNA + S-adenosyl-L-methionine = N(2)-methylguanosine(1835) in 23S rRNA + S-adenosyl-L-homocysteine + H(+). Specifically methylates the guanine in position 1835 (m2G1835) of 23S rRNA. The polypeptide is Ribosomal RNA large subunit methyltransferase G (Pseudomonas aeruginosa (strain UCBPP-PA14)).